Consider the following 1073-residue polypeptide: Envelopment polyprotein (1073 aa).

The signal sequence occupies residues 1–19 (MMKVIWFSSLICFVIQCSG). Residues 20–453 (DSGPIICAGP…NPQCYPAKKW (434 aa)) lie on the Lumenal side of the membrane. An intrachain disulfide couples cysteine 26 to cysteine 49. 2 N-linked (GlcNAc...) asparagine; by host glycosylation sites follow: asparagine 33 and asparagine 63. Cystine bridges form between cysteine 143–cysteine 156, cysteine 180–cysteine 327, cysteine 206–cysteine 216, cysteine 258–cysteine 305, cysteine 266–cysteine 303, cysteine 274–cysteine 280, cysteine 287–cysteine 292, cysteine 349–cysteine 352, cysteine 356–cysteine 424, and cysteine 376–cysteine 381. A helical transmembrane segment spans residues 454–474 (LFIIIVILLGYAGLMLLTNVL). Positions 475–521 (KAIGIWGSWVIAPVKLMFAIIKKLMRTVSCLMRKLMDRGRQVIHEEI) are golgi retention signal. The Cytoplasmic segment spans residues 475–535 (KAIGIWGSWV…EGNQDDVRIE (61 aa)). The interval 536–562 (MARPRRVRHWMYSPVILTILAIGLAES) is internal signal sequence for glycoprotein C. 10 cysteine pairs are disulfide-bonded: cysteine 563/cysteine 604, cysteine 576/cysteine 586, cysteine 629/cysteine 725, cysteine 644/cysteine 841, cysteine 650/cysteine 698, cysteine 656/cysteine 705, cysteine 660/cysteine 687, cysteine 691/cysteine 696, cysteine 778/cysteine 793, and cysteine 809/cysteine 823. The Lumenal segment spans residues 563-1036 (CDEMVHADSK…ALFGNGLSRW (474 aa)). The fusion loop stretch occupies residues 650–656 (CRWAGDC). Residues 691-705 (CGGAACGCFNAAPSC) are fusion loop. Asparagine 853 and asparagine 914 each carry an N-linked (GlcNAc...) asparagine; by host glycan. Disulfide bonds link cysteine 908–cysteine 978, cysteine 918–cysteine 921, and cysteine 943–cysteine 974. Residue asparagine 936 is glycosylated (N-linked (GlcNAc...) asparagine; by host). The helical transmembrane segment at 1037–1057 (ILGVIGVLLGGLALFFMIMSL) threads the bilayer. At 1058 to 1073 (FKLGTKQVFRSRTKLA) the chain is on the cytoplasmic side.

This sequence belongs to the phlebovirus envelope glycoprotein family. Homodimer. Heterodimer with glycoprotein C. Homotrimer (postfusion). As to quaternary structure, heterodimer with glycoprotein N. Post-translationally, specific enzymatic cleavages in vivo yield mature proteins including glycoprotein C and glycoprotein N. The cytoplasmic tail is Palmitoylated. In terms of processing, glycosylated. Post-translationally, palmitoylated.

The protein localises to the virion membrane. It is found in the host Golgi apparatus membrane. Its subcellular location is the host endoplasmic reticulum membrane. In terms of biological role, structural component of the virion that interacts with glycoprotein C. It shields the hydrophobic fusion loops of the glycoprotein C, preventing premature fusion. The glycoprotein protrusions are arranged on an icosahedral lattice, with T=12 triangulation. They are able to attach the virion to the host cell receptor CD209/DC-SIGN and to promote fusion of membranes with the late endosome after clathrin-mediated endocytosis of the virion. Plays a role in the packaging of ribonucleoproteins during virus assembly. Functionally, structural component of the virion that interacts with glycoprotein N. Acts as a class II fusion protein that is activated upon acidification and subsequent repositioning of the glycoprotein N. The glycoprotein protrusions are arranged on an icosahedral lattice, with T=12 triangulation. They are able to attach the virion to the host cell receptor CD209/DC-SIGN and to promote fusion of membranes with the late endosome after clathrin-mediated endocytosis of the virion. This Dabie bandavirus (Severe fever with thrombocytopenia virus) protein is Envelopment polyprotein.